Here is a 415-residue protein sequence, read N- to C-terminus: Serine hydroxymethyltransferase 1 (415 aa).

(6S)-5,6,7,8-tetrahydrofolate-binding positions include Leu-122 and 126-128 (GHL). Position 230 is an N6-(pyridoxal phosphate)lysine (Lys-230).

This sequence belongs to the SHMT family. In terms of assembly, homodimer. Requires pyridoxal 5'-phosphate as cofactor.

The protein localises to the cytoplasm. It carries out the reaction (6R)-5,10-methylene-5,6,7,8-tetrahydrofolate + glycine + H2O = (6S)-5,6,7,8-tetrahydrofolate + L-serine. It functions in the pathway one-carbon metabolism; tetrahydrofolate interconversion. Its pathway is amino-acid biosynthesis; glycine biosynthesis; glycine from L-serine: step 1/1. Catalyzes the reversible interconversion of serine and glycine with tetrahydrofolate (THF) serving as the one-carbon carrier. This reaction serves as the major source of one-carbon groups required for the biosynthesis of purines, thymidylate, methionine, and other important biomolecules. Also exhibits THF-independent aldolase activity toward beta-hydroxyamino acids, producing glycine and aldehydes, via a retro-aldol mechanism. The chain is Serine hydroxymethyltransferase 1 from Cupriavidus pinatubonensis (strain JMP 134 / LMG 1197) (Cupriavidus necator (strain JMP 134)).